Reading from the N-terminus, the 341-residue chain is Hydrogenase expression/formation protein HupE (341 aa).

Belongs to the HypE family.

In terms of biological role, may be involved in the maturation of the NifE hydrogenase. The polypeptide is Hydrogenase expression/formation protein HupE (hupE) (Azotobacter chroococcum mcd 1).